Consider the following 179-residue polypeptide: Large ribosomal subunit protein uL16m (179 aa).

Belongs to the universal ribosomal protein uL16 family. In terms of assembly, component of the mitochondrial ribosome large subunit.

The protein resides in the mitochondrion. This is Large ribosomal subunit protein uL16m (RPL16) from Arabidopsis thaliana (Mouse-ear cress).